Consider the following 266-residue polypeptide: Methionine aminopeptidase (266 aa).

A substrate-binding site is contributed by His-80. The a divalent metal cation site is built by Asp-98, Asp-109, and His-172. His-179 is a binding site for substrate. A divalent metal cation-binding residues include Glu-206 and Glu-237.

This sequence belongs to the peptidase M24A family. Methionine aminopeptidase type 1 subfamily. As to quaternary structure, monomer. The cofactor is Co(2+). Requires Zn(2+) as cofactor. It depends on Mn(2+) as a cofactor. Fe(2+) serves as cofactor.

It carries out the reaction Release of N-terminal amino acids, preferentially methionine, from peptides and arylamides.. Functionally, removes the N-terminal methionine from nascent proteins. The N-terminal methionine is often cleaved when the second residue in the primary sequence is small and uncharged (Met-Ala-, Cys, Gly, Pro, Ser, Thr, or Val). Requires deformylation of the N(alpha)-formylated initiator methionine before it can be hydrolyzed. This is Methionine aminopeptidase from Buchnera aphidicola subsp. Baizongia pistaciae (strain Bp).